The sequence spans 478 residues: Sugar transporter ERD6-like 18 (478 aa).

A run of 12 helical transmembrane segments spans residues 31–51, 71–91, 110–130, 133–153, 162–180, 188–208, 270–290, 306–326, 333–353, 367–387, 407–427, and 433–453; these read ITAC…SFGV, IAQF…GALF, LLCI…WLNF, ISSG…IAEI, FTFT…VYFS, ILAL…FFVP, TLVV…SAVL, IGST…VILV, PLLL…GVAF, VFTF…LGGL, IVTL…NFLL, and GTFY…WLLV.

The protein belongs to the major facilitator superfamily. Sugar transporter (TC 2.A.1.1) family. As to expression, expressed in leaf vasculature, stem and flowers.

Its subcellular location is the membrane. Its function is as follows. Sugar transporter. The protein is Sugar transporter ERD6-like 18 (SFP2) of Arabidopsis thaliana (Mouse-ear cress).